The primary structure comprises 98 residues: Large ribosomal subunit protein uL23 (98 aa).

Belongs to the universal ribosomal protein uL23 family. As to quaternary structure, part of the 50S ribosomal subunit. Contacts protein L29, and trigger factor when it is bound to the ribosome.

In terms of biological role, one of the early assembly proteins it binds 23S rRNA. One of the proteins that surrounds the polypeptide exit tunnel on the outside of the ribosome. Forms the main docking site for trigger factor binding to the ribosome. The protein is Large ribosomal subunit protein uL23 of Rickettsia africae (strain ESF-5).